Reading from the N-terminus, the 132-residue chain is uncharacterized protein (132 aa).

3 helical membrane passes run 18–38 (MLFI…FIGI), 50–70 (IIYF…GVFI), and 71–91 (VVPL…LYLI).

Its subcellular location is the cell membrane. This is an uncharacterized protein from Bacillus subtilis (strain 168).